The chain runs to 470 residues: MTKTLPEDFIFGGATAAYQAEGATNTDGKGRVAWDTYLEENYWYTAEPASDFYDRYPVDLELSEKFGVNGIRISIAWSRIFPNGYGEVNPKGVEYYHKLFAECHKRHVEPFVTLHHFDTPEVLHKDGDFLNRKTIDYFVDYAEYCFKEFPEVKYWTTFNEIGPIGDGQYLVGKFPPGIKYDFEKVFQSHHNMMVAHARAVKLFKDGGYKGEIGVVHALPTKYPFDPSNPEDVRAAELEDIIHNKFILDATYLGKYSRETMEGVQHILSVNGGKLNITDEDYAILDAAKDLNDFLGINYYMSDWMRGYDGESEITHNATGDKGGSKYQLKGVGQREFDVDVPRTDWDWMIYPQGLYDQIMRVVKDYPNYHKIYITENGLGYKDEFIESEKTVHDDARIDYVRQHLNVIADAIIDGANVKGYFIWSLMDVFSWSNGYEKRYGLFYVDFETQERYPKKSAYWYKELAETKEIK.

Glutamine 19, histidine 116, asparagine 159, glutamate 160, and asparagine 297 together coordinate D-galactose 6-phosphate. Glutamate 160 (proton donor) is an active-site residue. Glutamate 375 acts as the Nucleophile in catalysis. Residues serine 430, tryptophan 431, lysine 437, and tyrosine 439 each coordinate D-galactose 6-phosphate.

This sequence belongs to the glycosyl hydrolase 1 family.

It carries out the reaction a 6-phospho-beta-D-galactoside + H2O = D-galactose 6-phosphate + an alcohol. Its pathway is carbohydrate metabolism; lactose degradation; D-galactose 6-phosphate and beta-D-glucose from lactose 6-phosphate: step 1/1. This is 6-phospho-beta-galactosidase from Staphylococcus aureus (strain COL).